The sequence spans 128 residues: Translation initiation factor 5A (128 aa).

K35 is subject to Hypusine.

This sequence belongs to the eIF-5A family.

The protein resides in the cytoplasm. Its function is as follows. Functions by promoting the formation of the first peptide bond. This Methanosarcina acetivorans (strain ATCC 35395 / DSM 2834 / JCM 12185 / C2A) protein is Translation initiation factor 5A (eif5a).